Reading from the N-terminus, the 355-residue chain is Beta-ketoacyl-[acyl-carrier-protein] synthase III (355 aa).

Catalysis depends on residues cysteine 122 and histidine 280. The tract at residues 281–285 is ACP-binding; it reads QANMR. Asparagine 311 is a catalytic residue.

This sequence belongs to the thiolase-like superfamily. FabH family. As to quaternary structure, homodimer.

The protein localises to the cytoplasm. The catalysed reaction is malonyl-[ACP] + acetyl-CoA + H(+) = 3-oxobutanoyl-[ACP] + CO2 + CoA. The protein operates within lipid metabolism; fatty acid biosynthesis. Catalyzes the condensation reaction of fatty acid synthesis by the addition to an acyl acceptor of two carbons from malonyl-ACP. Catalyzes the first condensation reaction which initiates fatty acid synthesis and may therefore play a role in governing the total rate of fatty acid production. Possesses both acetoacetyl-ACP synthase and acetyl transacylase activities. Its substrate specificity determines the biosynthesis of branched-chain and/or straight-chain of fatty acids. The protein is Beta-ketoacyl-[acyl-carrier-protein] synthase III of Kocuria rhizophila (strain ATCC 9341 / DSM 348 / NBRC 103217 / DC2201).